A 182-amino-acid chain; its full sequence is NAD(P)H-quinone oxidoreductase subunit J (182 aa).

Belongs to the complex I 30 kDa subunit family. As to quaternary structure, NDH-1 can be composed of about 15 different subunits; different subcomplexes with different compositions have been identified which probably have different functions.

It is found in the cellular thylakoid membrane. The catalysed reaction is a plastoquinone + NADH + (n+1) H(+)(in) = a plastoquinol + NAD(+) + n H(+)(out). It catalyses the reaction a plastoquinone + NADPH + (n+1) H(+)(in) = a plastoquinol + NADP(+) + n H(+)(out). Its function is as follows. NDH-1 shuttles electrons from an unknown electron donor, via FMN and iron-sulfur (Fe-S) centers, to quinones in the respiratory and/or the photosynthetic chain. The immediate electron acceptor for the enzyme in this species is believed to be plastoquinone. Couples the redox reaction to proton translocation, and thus conserves the redox energy in a proton gradient. Cyanobacterial NDH-1 also plays a role in inorganic carbon-concentration. The polypeptide is NAD(P)H-quinone oxidoreductase subunit J (Synechococcus sp. (strain WH7803)).